The sequence spans 335 residues: MKVEFAPLNIPLARRLQTAAVLHWLLSFLLFAQVCLGIIVFLIIYNYWFLYLPYLTWLYFDWQTPEQGGRRSEWVRNWAIWRYFKDYFPIHLIKTWDLDPSHNYIFGFHPHGVLVVGAFGNFCTNYSAFKELFPGFTSYLHVLPYWFRCPLFREYLMSSGPVSVSKKSVCHVLSKEGGGNISVIVLGGAEESLDAHPGKFTLFIRQRKGFVKIALTHGAYLVPVFSFGENELFKQVSNPEGSWLRNVQEKLQKIMGFALPLFHARGIFQYNFGLIPYRKPIHTVVGRPIPVRQTLNPTSEQIEELHQTYMEELRKLFEEHKGKYGIPENETLIFR.

Transmembrane regions (helical) follow at residues 24–44 and 104–124; these read WLLS…FLII and YIFG…NFCT. N-linked (GlcNAc...) asparagine glycosylation is found at Asn125 and Asn180.

This sequence belongs to the diacylglycerol acyltransferase family.

The protein localises to the endoplasmic reticulum membrane. The enzyme catalyses a 2-acylglycerol + an acyl-CoA = a 1,2-diacylglycerol + CoA. It catalyses the reaction 2-(9Z-octadecenoyl)-glycerol + butanoyl-CoA = 1-butanoyl-2-(9Z-octadecenoyl)-glycerol + CoA. It carries out the reaction 2-(9Z-octadecenoyl)-glycerol + octanoyl-CoA = 1-octanoyl-2-(9Z-octadecenoyl)-glycerol + CoA. The catalysed reaction is 2-(9Z-octadecenoyl)-glycerol + dodecanoyl-CoA = 1-dodecanoyl-2-(9Z-octadecenoyl)-glycerol + CoA. The enzyme catalyses 2-(9Z-octadecenoyl)-glycerol + tetradecanoyl-CoA = 1-tetradecanoyl-2-(9Z-octadecenoyl)-glycerol + CoA. It catalyses the reaction 2-(9Z-octadecenoyl)-glycerol + hexadecanoyl-CoA = 1-hexadecanoyl-2-(9Z-octadecenoyl)-glycerol + CoA. It carries out the reaction 2-(9Z-octadecenoyl)-glycerol + octadecanoyl-CoA = 1-octadecanoyl-2-(9Z-octadecenoyl)-glycerol + CoA. The catalysed reaction is eicosanoyl-CoA + 2-(9Z-octadecenoyl)-glycerol = 1-eicosanoyl-2-(9Z-octadecenoyl)-glycerol + CoA. The enzyme catalyses 2-(9Z-octadecenoyl)-glycerol + (9Z)-octadecenoyl-CoA = 1,2-di-(9Z-octadecenoyl)-glycerol + CoA. It catalyses the reaction 2-(9Z-octadecenoyl)-glycerol + (9Z,12Z)-octadecadienoyl-CoA = 1-(9Z,12Z-octadecadienoyl)-2-(9Z-octadecenoyl)-glycerol + CoA. It carries out the reaction 2-(9Z-octadecenoyl)-glycerol + (5Z,8Z,11Z,14Z)-eicosatetraenoyl-CoA = 1-(5Z,8Z,11Z,14Z-eicosatetraenoyl)-2-(9Z-octadecenoyl)-glycerol + CoA. The catalysed reaction is a 2-acylglycerol + an acyl-CoA = a 1,2-diacyl-sn-glycerol + CoA. The enzyme catalyses a 2-acylglycerol + an acyl-CoA = a 2,3-diacyl-sn-glycerol + CoA. It catalyses the reaction a 1-acylglycerol + an acyl-CoA = a 1,2-diacylglycerol + CoA. It carries out the reaction 1-dodecanoylglycerol + (9Z)-octadecenoyl-CoA = 1-dodecanoyl-2-(9Z-octadecenoyl)-glycerol + CoA. The catalysed reaction is 1-tetradecanoylglycerol + (9Z)-octadecenoyl-CoA = 1-tetradecanoyl-2-(9Z-octadecenoyl)-glycerol + CoA. The enzyme catalyses 1-hexadecanoylglycerol + (9Z)-octadecenoyl-CoA = 1-hexadecanoyl-2-(9Z-octadecenoyl)-glycerol + CoA. It catalyses the reaction 1-(9Z-octadecenoyl)-glycerol + (9Z)-octadecenoyl-CoA = 1,2-di-(9Z-octadecenoyl)-glycerol + CoA. It carries out the reaction 1-(9Z,12Z-octadecadienoyl)-glycerol + (9Z)-octadecenoyl-CoA = 1-(9Z,12Z-octadecadienoyl)-2-(9Z-octadecenoyl)-glycerol + CoA. The catalysed reaction is 1-(9Z,12Z,15Z-octadecatrienoyl)-glycerol + (9Z)-octadecenoyl-CoA = 1-(9Z,12Z,15Z-octadecatrienoyl)-2-(9Z-octadecenoyl)-glycerol + CoA. The enzyme catalyses 1-(5Z,8Z,11Z,14Z-eicosatetraenoyl)-glycerol + (9Z)-octadecenoyl-CoA = 1-(5Z,8Z,11Z,14Z-eicosatetraenoyl)-2-(9Z-octadecenoyl)-glycerol + CoA. It catalyses the reaction a 1-acylglycerol + an acyl-CoA = a 1,3-diacylglycerol + CoA. It carries out the reaction 1-dodecanoylglycerol + (9Z)-octadecenoyl-CoA = 1-dodecanoyl-3-(9Z-octadecenoyl)-glycerol + CoA. The catalysed reaction is 1-hexadecanoylglycerol + (9Z)-octadecenoyl-CoA = 1-(9Z-octadecenoyl)-3-hexadecanoylglycerol + CoA. The enzyme catalyses 1-octadecanoylglycerol + (9Z)-octadecenoyl-CoA = 1-octadecanoyl-3-(9Z-octadecenoyl)-glycerol + CoA. It catalyses the reaction 1-(9Z-octadecenoyl)-sn-glycerol + (9Z)-octadecenoyl-CoA = 1,3-di-(9Z-octadecenoyl)-glycerol + CoA. It carries out the reaction 1-(9Z,12Z-octadecadienoyl)-glycerol + (9Z)-octadecenoyl-CoA = 1-(9Z-octadecenoyl)-3-(9Z,12Z-octadecadienoyl)-glycerol + CoA. The catalysed reaction is 1-(9Z,12Z,15Z-octadecatrienoyl)-glycerol + (9Z)-octadecenoyl-CoA = 1-(9Z,12Z,15Z-octadecatrienoyl)-3-(9Z-octadecenoyl)-glycerol + CoA. The enzyme catalyses a 1-acyl-sn-glycerol + an acyl-CoA = a 1,3-diacyl-sn-glycerol + CoA. It catalyses the reaction a 3-acyl-sn-glycerol + an acyl-CoA = a 1,3-diacyl-sn-glycerol + CoA. It carries out the reaction 3-octadecanoyl-sn-glycerol + (9Z)-octadecenoyl-CoA = 1-(9Z-octadecenoyl)-3-octadecanoyl-sn-glycerol + CoA. The protein operates within glycerolipid metabolism; triacylglycerol biosynthesis. Its function is as follows. Involved in glycerolipid synthesis and lipid metabolism. Catalyzes the formation of diacylglycerol, the precursor of triacylglycerol, by transferring the acyl chain of a fatty acyl-CoA to a monoacylglycerol, mainly at the sn-1 or sn-3 positions. It uses both sn-2-monoacylglycerol (2-acylglycerol) and sn-1-monoacylglycerol (1-acyl-sn-glycerol) equally well as substrates, and uses sn-3-monoacylglycerol (3-acyl-sn-glycerol) with lower efficiency. Probably not involved in absorption of dietary fat in the small intestine. The chain is 2-acylglycerol O-acyltransferase 1 (MOGAT1) from Bos taurus (Bovine).